An 802-amino-acid chain; its full sequence is Putative flavin carrier protein 3 (802 aa).

The N-terminal stretch at Met-1–Ala-28 is a signal peptide. Residues Lys-29–Gln-169 lie on the Lumenal side of the membrane. An N-linked (GlcNAc...) asparagine glycan is attached at Asn-149. A helical membrane pass occupies residues Ile-170–Leu-190. The Cytoplasmic segment spans residues Ser-191–Ser-200. A helical transmembrane segment spans residues His-201–Met-221. Over Gln-222 to Pro-229 the chain is Lumenal. A helical membrane pass occupies residues Ile-230–Met-250. The Cytoplasmic portion of the chain corresponds to Gln-251–Arg-255. A helical membrane pass occupies residues Trp-256–Ala-278. The Lumenal portion of the chain corresponds to Gln-279 to Ser-323. An N-linked (GlcNAc...) asparagine glycan is attached at Asn-321. The helical transmembrane segment at Ile-324–Ile-344 threads the bilayer. Topologically, residues Val-345–Gly-377 are cytoplasmic. A helical membrane pass occupies residues Ala-378–Phe-398. Topologically, residues Thr-399–Ala-405 are lumenal. Residues Val-406 to Trp-426 form a helical membrane-spanning segment. Residues Arg-427–His-467 are Cytoplasmic-facing. The chain crosses the membrane as a helical span at residues Tyr-468 to Ala-488. At Gln-489–Gln-495 the chain is on the lumenal side. Residues Val-496–Tyr-516 traverse the membrane as a helical segment. The Cytoplasmic portion of the chain corresponds to Leu-517–Asn-525. A helical transmembrane segment spans residues Ile-526–Phe-546. Residue Asn-547 is glycosylated (N-linked (GlcNAc...) asparagine). Topologically, residues Asn-547 to Gly-557 are lumenal. Residues Trp-558 to Phe-578 form a helical membrane-spanning segment. Topologically, residues Ala-579–Met-802 are cytoplasmic. Ser-616 and Ser-635 each carry phosphoserine. The tract at residues Lys-629–Met-802 is disordered. Composition is skewed to polar residues over residues Asp-653–Ser-663, Lys-697–Gly-717, and Asp-761–Gln-788. Ser-779 and Ser-782 each carry phosphoserine.

Belongs to the transient receptor potential (TRP) ion channel family.

It localises to the endoplasmic reticulum membrane. Functionally, may be responsible for the transport of FAD into the endoplasmic reticulum lumen, where it is required for oxidative protein folding. This is Putative flavin carrier protein 3 (FLC3) from Saccharomyces cerevisiae (strain ATCC 204508 / S288c) (Baker's yeast).